Here is a 561-residue protein sequence, read N- to C-terminus: Tectonic-like complex member MKS1 (561 aa).

A C2 B9-type domain is found at 314–442; that stretch reads LRLFVNGEVV…TVSTWRPMEL (129 aa).

In terms of assembly, part of the tectonic-like complex (also named B9 complex). Interacts with TMEM107. Interacts with TCTN3, AHI1, TCTN1, TCTN2, CC2D2A. Interacts with FLNA. Interacts with TMEM67. Interacts with B9D1 and B9D2. As to expression, widely expressed in embryo at 15.5 dpc, with a relatively strong expression in brain, liver, kidney and digits of the upper limbs. Highly expressed in bronchiolar epithelium.

It is found in the cytoplasm. Its subcellular location is the cytoskeleton. It localises to the cilium basal body. The protein localises to the microtubule organizing center. The protein resides in the centrosome. Functionally, component of the tectonic-like complex, a complex localized at the transition zone of primary cilia and acting as a barrier that prevents diffusion of transmembrane proteins between the cilia and plasma membranes. Involved in centrosome migration to the apical cell surface during early ciliogenesis. Required for ciliary structure and function, including a role in regulating length and appropriate number through modulating centrosome duplication. Required for cell branching morphology. This chain is Tectonic-like complex member MKS1 (Mks1), found in Mus musculus (Mouse).